The chain runs to 37 residues: Large ribosomal subunit protein bL36 (37 aa).

This sequence belongs to the bacterial ribosomal protein bL36 family.

The chain is Large ribosomal subunit protein bL36 from Leptospira interrogans serogroup Icterohaemorrhagiae serovar copenhageni (strain Fiocruz L1-130).